The primary structure comprises 620 residues: Chaperone protein HscA homolog (620 aa).

The protein belongs to the heat shock protein 70 family.

Its function is as follows. Chaperone involved in the maturation of iron-sulfur cluster-containing proteins. Has a low intrinsic ATPase activity which is markedly stimulated by HscB. The sequence is that of Chaperone protein HscA homolog from Pasteurella multocida (strain Pm70).